The following is a 405-amino-acid chain: ATP phosphoribosyltransferase regulatory subunit (405 aa).

It belongs to the class-II aminoacyl-tRNA synthetase family. HisZ subfamily. In terms of assembly, heteromultimer composed of HisG and HisZ subunits.

It localises to the cytoplasm. It participates in amino-acid biosynthesis; L-histidine biosynthesis; L-histidine from 5-phospho-alpha-D-ribose 1-diphosphate: step 1/9. Functionally, required for the first step of histidine biosynthesis. May allow the feedback regulation of ATP phosphoribosyltransferase activity by histidine. The polypeptide is ATP phosphoribosyltransferase regulatory subunit (Microcystis aeruginosa (strain NIES-843 / IAM M-2473)).